The primary structure comprises 237 residues: MTHLRRSTSPEWWPVERKGAPWSIKPSPGPHPANSSIPLAVLLRDVFHYAKTLREARLIIGKGYVKVDGKVRRDYKYPVGLMDVIELTPINEYYRIIPDPVNFLRPIRIDKSEAGVKVCRIEDKTMVKAGKIQLNLHDGRNIIVDQDEGRKYETLGSVVVNLEDGKLMDYYPMQPNQYVIAFNGVNVGRHGTLINWVRSFRKRDAIATVKAKDSEFRTVLNYLLVIGKESPVVKVTE.

An S4 RNA-binding domain is found at 37–100 (IPLAVLLRDV…NEYYRIIPDP (64 aa)).

This sequence belongs to the eukaryotic ribosomal protein eS4 family.

This Caldivirga maquilingensis (strain ATCC 700844 / DSM 13496 / JCM 10307 / IC-167) protein is Small ribosomal subunit protein eS4.